The chain runs to 580 residues: Putative ankyrin repeat protein L63 (580 aa).

ANK repeat units lie at residues Ser-81–Ile-110, Asp-111–Ala-140, Asn-141–Ala-170, Asn-172–Ala-200, Asp-202–Lys-230, Ser-314–Ala-339, Ser-340–Cys-369, Gly-370–Ser-399, Gly-400–Ala-429, Asn-431–Ala-459, Asp-461–Ala-489, Gly-490–Ala-519, Asp-521–Ala-549, and Asn-551–Pro-579.

This Acanthamoeba polyphaga (Amoeba) protein is Putative ankyrin repeat protein L63.